A 310-amino-acid chain; its full sequence is Putative HTH-type transcriptional regulatory protein YN1551_1579 (310 aa).

An HTH cro/C1-type domain is found at 125-180 (LKHKREEMGYSIGDVAKFLGVSRKAIYDYEKGDSDVSLEVAEKLIDLFGDDIIGDV). The segment at residues 136–155 (IGDVAKFLGVSRKAIYDYEK) is a DNA-binding region (H-T-H motif).

This chain is Putative HTH-type transcriptional regulatory protein YN1551_1579, found in Saccharolobus islandicus (strain Y.N.15.51 / Yellowstone #2) (Sulfolobus islandicus).